The chain runs to 142 residues: MYSFYKPFGFVNTDINKPIDKPIMSCSTHTYNNDKLVYKQFKRLTKLNNDLKKFCDDPDFVNSTFRRNIIYNIHNKRIHLIKKLSMIEPDITYNKFIIMWTKNSFNKIKSTSRKVPKEAKSDWYLYKNFVFVQGLNRHKQTV.

This is an uncharacterized protein from Acanthamoeba polyphaga (Amoeba).